We begin with the raw amino-acid sequence, 215 residues long: UPF0323 lipoprotein HP_0232 (215 aa).

The first 27 residues, 1–27 (MKKPYRKISDYAIVGGLSALVMVSIVG), serve as a signal peptide directing secretion. Residue Cys28 is the site of N-palmitoyl cysteine attachment. Cys28 carries S-diacylglycerol cysteine lipidation. A compositionally biased stretch (polar residues) spans 158–169 (QRTYKSPQAYQR). A disordered region spans residues 158-215 (QRTYKSPQAYQRSQNSFSKSAPSASSMGGASKGQSGFFGSSRPTSSPAVSSGTRGFNS). Residues 170–208 (SQNSFSKSAPSASSMGGASKGQSGFFGSSRPTSSPAVSS) are compositionally biased toward low complexity.

It belongs to the UPF0323 family.

It is found in the cell membrane. This Helicobacter pylori (strain ATCC 700392 / 26695) (Campylobacter pylori) protein is UPF0323 lipoprotein HP_0232.